A 199-amino-acid chain; its full sequence is Imidazoleglycerol-phosphate dehydratase (199 aa).

It belongs to the imidazoleglycerol-phosphate dehydratase family.

The protein localises to the cytoplasm. It catalyses the reaction D-erythro-1-(imidazol-4-yl)glycerol 3-phosphate = 3-(imidazol-4-yl)-2-oxopropyl phosphate + H2O. Its pathway is amino-acid biosynthesis; L-histidine biosynthesis; L-histidine from 5-phospho-alpha-D-ribose 1-diphosphate: step 6/9. In Lactococcus lactis subsp. cremoris (strain MG1363), this protein is Imidazoleglycerol-phosphate dehydratase.